We begin with the raw amino-acid sequence, 126 residues long: Ribonuclease P protein component (126 aa).

Belongs to the RnpA family. Consists of a catalytic RNA component (M1 or rnpB) and a protein subunit.

It catalyses the reaction Endonucleolytic cleavage of RNA, removing 5'-extranucleotides from tRNA precursor.. RNaseP catalyzes the removal of the 5'-leader sequence from pre-tRNA to produce the mature 5'-terminus. It can also cleave other RNA substrates such as 4.5S RNA. The protein component plays an auxiliary but essential role in vivo by binding to the 5'-leader sequence and broadening the substrate specificity of the ribozyme. This Synechococcus sp. (strain JA-3-3Ab) (Cyanobacteria bacterium Yellowstone A-Prime) protein is Ribonuclease P protein component.